The primary structure comprises 476 residues: MVQNHQTVLAVDMPQTGGSKYLDDDGKNKRTGSVWTASAHIITAVIGSGVLSLAWATAQLGWLAGPVVMLLFSAVTYFTSSLLAACYRSGDPISGKRNYTYMDAVRSNLGGVKVTLCGIVQYLNIFGVAIGYTIASAISMMAIKRSNCFHKSGGKDPCHMNSNPYMIAFGLVQILFSQIPDFDQLWWLSILAAVMSFTYSSAGLALGIAQVVVNGKVKGSLTGISIGAVTETQKIWRTFQALGDIAFAYSYSIILIEIQDTVKSPPSEEKTMKKATLVSVSVTTMFYMLCGCMGYAAFGDLSPGNLLTGFGFYNPYWLLDIANAAIVIHLIGAYQVYCQPLFAFIEKQASIQFPDSEFIAKDIKIPIPGFKPLRLNVFRLIWRTVFVIITTVISMLLPFFNDVVGLLGALGFWPLTVYFPVEMYIAQKKIPRWSTRWVCLQVFSLGCLVVSIAAAAGSIAGVLLDLKSYKPFRSEY.

The Cytoplasmic portion of the chain corresponds to 1–33 (MVQNHQTVLAVDMPQTGGSKYLDDDGKNKRTGS). The chain crosses the membrane as a helical span at residues 34–54 (VWTASAHIITAVIGSGVLSLA). Residues 55-57 (WAT) lie on the Extracellular side of the membrane. Residues 58–78 (AQLGWLAGPVVMLLFSAVTYF) form a helical membrane-spanning segment. The Cytoplasmic segment spans residues 79–122 (TSSLLAACYRSGDPISGKRNYTYMDAVRSNLGGVKVTLCGIVQY). A helical membrane pass occupies residues 123–143 (LNIFGVAIGYTIASAISMMAI). Residues 144-166 (KRSNCFHKSGGKDPCHMNSNPYM) are Extracellular-facing. The next 2 helical transmembrane spans lie at 167–187 (IAFG…QLWW) and 188–208 (LSIL…ALGI). Over 209 to 277 (AQVVVNGKVK…EEKTMKKATL (69 aa)) the chain is Extracellular. Residues 278–298 (VSVSVTTMFYMLCGCMGYAAF) traverse the membrane as a helical segment. Topologically, residues 299-300 (GD) are cytoplasmic. Residues 301 to 321 (LSPGNLLTGFGFYNPYWLLDI) traverse the membrane as a helical segment. Topologically, residues 322–324 (ANA) are extracellular. The helical transmembrane segment at 325–345 (AIVIHLIGAYQVYCQPLFAFI) threads the bilayer. Residues 346–384 (EKQASIQFPDSEFIAKDIKIPIPGFKPLRLNVFRLIWRT) lie on the Cytoplasmic side of the membrane. 2 helical membrane-spanning segments follow: residues 385 to 405 (VFVI…DVVG) and 406 to 426 (LLGA…MYIA). Over 427 to 441 (QKKIPRWSTRWVCLQ) the chain is Cytoplasmic. The helical transmembrane segment at 442–462 (VFSLGCLVVSIAAAAGSIAGV) threads the bilayer. Residues 463–476 (LLDLKSYKPFRSEY) lie on the Extracellular side of the membrane.

It belongs to the amino acid/polyamine transporter 2 family. Amino acid/auxin permease (AAAP) (TC 2.A.18.2) subfamily. As to expression, expressed in the root phloem. Detected in stamens, in cotyledons, and in major veins of mature leaves.

The protein localises to the cell membrane. It localises to the nucleus membrane. Its subcellular location is the endomembrane system. Inhibited by carbonylcyanide m-chlorophenylhydrazone and 2,4-dinitrophenol. Amino acid-proton symporter. Stereospecific transporter with a broad specificity for GABA, tryptophan and both neutral and basic amino acids. High affinity transport of cationic amino acids. The chain is Amino acid permease 3 (AAP3) from Arabidopsis thaliana (Mouse-ear cress).